The following is a 320-amino-acid chain: cUMP-AMP-activated phospholipase (320 aa).

One can recognise a PNPLA domain in the interval Leu-23 to Ile-204. Residues Gly-27–Gly-32 carry the GXGXXG motif. The GXSXG motif lies at Gly-59–Gly-63. Ser-61 functions as the Nucleophile in the catalytic mechanism. Asp-191 acts as the Proton acceptor in catalysis. Positions Asp-191–Gly-193 match the DGA/G motif.

This sequence belongs to the patatin family.

It catalyses the reaction a 1,2-diacyl-sn-glycero-3-phosphocholine + H2O = a 2-acyl-sn-glycero-3-phosphocholine + a fatty acid + H(+). Its activity is regulated as follows. Phospholipase activity is specifically activated upon 3',3'-cUAMP binding. Is not activated by the other cyclic dinucleotides 3',3'-cGAMP, 3',3'-c-diAMP and 3',3'-c-diGMP. Therefore, is specifically activated by only the nucleotide synthesized from its adjacently encoded nucleotidyltransferase (CdnE). Effector phospholipase of a CBASS antivirus system. CBASS (cyclic oligonucleotide-based antiphage signaling system) provides immunity against bacteriophage. The CD-NTase protein synthesizes cyclic nucleotides in response to infection; these serve as specific second messenger signals. The signals activate a diverse range of effectors, leading to bacterial cell death and thus abortive phage infection. A type II-A(UA) CBASS system. In terms of biological role, phospholipase that is activated upon binding to the cyclic dinucleotide (CDN) second messenger 3',3'-cyclic UMP-AMP (3',3'-cUAMP). The chain is cUMP-AMP-activated phospholipase from Escherichia coli.